We begin with the raw amino-acid sequence, 947 residues long: Protein translocase subunit SecA 1 (947 aa).

ATP is bound by residues glutamine 87, 105–109 (GEGKT), and aspartate 525. Positions 907 to 937 (DDADKAARDPNRPETWGKVGRNEDCPCNSGK) are disordered. Residues 908–918 (DADKAARDPNR) are compositionally biased toward basic and acidic residues. Residues cysteine 931, cysteine 933, cysteine 942, and histidine 943 each coordinate Zn(2+).

This sequence belongs to the SecA family. As to quaternary structure, monomer and homodimer. Part of the essential Sec protein translocation apparatus which comprises SecA, SecYEG and auxiliary proteins SecDF-YajC and YidC. Requires Zn(2+) as cofactor.

It localises to the cell inner membrane. Its subcellular location is the cytoplasm. It carries out the reaction ATP + H2O + cellular proteinSide 1 = ADP + phosphate + cellular proteinSide 2.. Its function is as follows. Part of the Sec protein translocase complex. Interacts with the SecYEG preprotein conducting channel. Has a central role in coupling the hydrolysis of ATP to the transfer of proteins into and across the cell membrane, serving both as a receptor for the preprotein-SecB complex and as an ATP-driven molecular motor driving the stepwise translocation of polypeptide chains across the membrane. This is Protein translocase subunit SecA 1 from Rhodopseudomonas palustris (strain BisA53).